The chain runs to 265 residues: Phosphatidylserine decarboxylase proenzyme (265 aa).

The active-site Schiff-base intermediate with substrate; via pyruvic acid is the Ser-183. Ser-183 carries the pyruvic acid (Ser); by autocatalysis modification. The segment at 218–242 (PQIESEPESEPALQTAPVETAANPS) is disordered.

Belongs to the phosphatidylserine decarboxylase family. PSD-A subfamily. In terms of assembly, heterodimer of a large membrane-associated beta subunit and a small pyruvoyl-containing alpha subunit. Requires pyruvate as cofactor. In terms of processing, is synthesized initially as an inactive proenzyme. Formation of the active enzyme involves a self-maturation process in which the active site pyruvoyl group is generated from an internal serine residue via an autocatalytic post-translational modification. Two non-identical subunits are generated from the proenzyme in this reaction, and the pyruvate is formed at the N-terminus of the alpha chain, which is derived from the carboxyl end of the proenzyme. The post-translation cleavage follows an unusual pathway, termed non-hydrolytic serinolysis, in which the side chain hydroxyl group of the serine supplies its oxygen atom to form the C-terminus of the beta chain, while the remainder of the serine residue undergoes an oxidative deamination to produce ammonia and the pyruvoyl prosthetic group on the alpha chain.

The protein resides in the cell membrane. The enzyme catalyses a 1,2-diacyl-sn-glycero-3-phospho-L-serine + H(+) = a 1,2-diacyl-sn-glycero-3-phosphoethanolamine + CO2. It functions in the pathway phospholipid metabolism; phosphatidylethanolamine biosynthesis; phosphatidylethanolamine from CDP-diacylglycerol: step 2/2. Catalyzes the formation of phosphatidylethanolamine (PtdEtn) from phosphatidylserine (PtdSer). The protein is Phosphatidylserine decarboxylase proenzyme of Neisseria meningitidis serogroup C (strain 053442).